A 697-amino-acid polypeptide reads, in one-letter code: Elongation factor G (697 aa).

The 283-residue stretch at 8 to 290 folds into the tr-type G domain; sequence ERYRNIGIMA…AVLSYMPSPV (283 aa). Residues 17-24, 88-92, and 142-145 each bind GTP; these read AHIDAGKT, DTPGH, and NKMD.

This sequence belongs to the TRAFAC class translation factor GTPase superfamily. Classic translation factor GTPase family. EF-G/EF-2 subfamily.

The protein localises to the cytoplasm. Its function is as follows. Catalyzes the GTP-dependent ribosomal translocation step during translation elongation. During this step, the ribosome changes from the pre-translocational (PRE) to the post-translocational (POST) state as the newly formed A-site-bound peptidyl-tRNA and P-site-bound deacylated tRNA move to the P and E sites, respectively. Catalyzes the coordinated movement of the two tRNA molecules, the mRNA and conformational changes in the ribosome. The sequence is that of Elongation factor G from Nitrosococcus oceani (strain ATCC 19707 / BCRC 17464 / JCM 30415 / NCIMB 11848 / C-107).